We begin with the raw amino-acid sequence, 286 residues long: Acetylglutamate kinase (286 aa).

Residues 63–64 (GG), R85, and N178 contribute to the substrate site.

Belongs to the acetylglutamate kinase family. ArgB subfamily.

Its subcellular location is the cytoplasm. The enzyme catalyses N-acetyl-L-glutamate + ATP = N-acetyl-L-glutamyl 5-phosphate + ADP. Its pathway is amino-acid biosynthesis; L-arginine biosynthesis; N(2)-acetyl-L-ornithine from L-glutamate: step 2/4. Functionally, catalyzes the ATP-dependent phosphorylation of N-acetyl-L-glutamate. This chain is Acetylglutamate kinase, found in Clostridioides difficile (strain 630) (Peptoclostridium difficile).